A 237-amino-acid chain; its full sequence is MAEAASSGSNSTSPPKDNGYIPGDDAWTICRNLWRGLTGKMTQEGMEQFRVARDVRNEKEDCKRCEDQRDYLLQYSPLIRFLQDNIQQLGGNISKHNIFCRRCKNRQAGGFDPDYGIQICANEMRNQGHLEDTLAHEMIHAYDHMRFKVDWDDNLRHAACAEIRASNLSGECRWMREFFSRGQWKFAQHHQECVRRRAILSVQARPACKDEQHATQVVNEVWDSCFRDTRPFDEIYR.

Polar residues predominate over residues 1-15; that stretch reads MAEAASSGSNSTSPP. The segment at 1–20 is disordered; sequence MAEAASSGSNSTSPPKDNGY. Histidine 136 is an a divalent metal cation binding site. Residue glutamate 137 is part of the active site. Histidine 140 is a binding site for a divalent metal cation.

It belongs to the peptidase M76 family.

It is found in the mitochondrion inner membrane. Its function is as follows. Has a dual role in the assembly of mitochondrial ATPase. Acts as a protease that removes N-terminal residues of mitochondrial ATPase CF(0) subunit 6 at the intermembrane space side. Also involved in the correct assembly of the membrane-embedded ATPase CF(0) particle, probably mediating association of subunit 6 with the subunit 9 ring. The sequence is that of Mitochondrial inner membrane protease ATP23 (ATP23) from Coccidioides immitis (strain RS) (Valley fever fungus).